Here is a 97-residue protein sequence, read N- to C-terminus: Small ribosomal subunit protein uS17 (97 aa).

The segment at 1-20 (MSEATVNDNAAVKNEKGARK) is disordered.

This sequence belongs to the universal ribosomal protein uS17 family. In terms of assembly, part of the 30S ribosomal subunit.

One of the primary rRNA binding proteins, it binds specifically to the 5'-end of 16S ribosomal RNA. This is Small ribosomal subunit protein uS17 from Corynebacterium jeikeium (strain K411).